Consider the following 588-residue polypeptide: Tannase (588 aa).

The first 18 residues, 1 to 18 (MRQHSRMAVAALAAGANA), serve as a signal peptide directing secretion. Cystine bridges form between cysteine 25–cysteine 71, cysteine 194–cysteine 502, and cysteine 261–cysteine 278. Serine 195 (acyl-ester intermediate) is an active-site residue. Aspartate 262, aspartate 265, aspartate 269, and valine 271 together coordinate Ca(2+). At glutamine 317 the chain carries Pyrrolidone carboxylic acid. Catalysis depends on charge relay system residues aspartate 455 and histidine 501.

The protein belongs to the tannase family. In terms of assembly, heterooctamer of 4 33 kDa and 4 30 kDa subunits linked by disulfide bond(s). Post-translationally, the protein is glycosylated to a carbohydrate content of 22.7%. The N-terminus of the 30 kDa subunit is blocked.

It carries out the reaction digallate + H2O = 2 3,4,5-trihydroxybenzoate + H(+). Functionally, hydrolyzes ester bonds of tannic acid to produce gallic acid and glucose. The sequence is that of Tannase from Aspergillus oryzae (strain ATCC 42149 / RIB 40) (Yellow koji mold).